Here is a 342-residue protein sequence, read N- to C-terminus: Galactose mutarotase (342 aa).

Residues 81–82 (NR) and His-107 each bind beta-D-galactose. Position 124 is a phosphoserine (Ser-124). His-176 serves as the catalytic Proton donor. Residues 176–178 (HSY), Asp-243, Gln-279, and Glu-307 each bind beta-D-galactose. The active-site Proton acceptor is Glu-307.

The protein belongs to the aldose epimerase family. Monomer.

The protein resides in the cytoplasm. The enzyme catalyses alpha-D-galactose = beta-D-galactose. It carries out the reaction alpha-D-glucose = beta-D-glucose. It functions in the pathway carbohydrate metabolism; hexose metabolism. The protein operates within carbohydrate metabolism; galactose metabolism. In terms of biological role, mutarotase that catalyzes the interconversion of beta-D-galactose and alpha-D-galactose during galactose metabolism. Beta-D-galactose is metabolized in the liver into glucose 1-phosphate, the primary metabolic fuel, by the action of four enzymes that constitute the Leloir pathway: GALM, GALK1 (galactokinase), GALT (galactose-1-phosphate uridylyltransferase) and GALE (UDP-galactose-4'-epimerase). Involved in the maintenance of the equilibrium between the beta- and alpha-anomers of galactose, therefore ensuring a sufficient supply of the alpha-anomer for GALK1. Also active on D-glucose although shows a preference for galactose over glucose. This chain is Galactose mutarotase (GALM), found in Bos taurus (Bovine).